We begin with the raw amino-acid sequence, 136 residues long: Large ribosomal subunit protein uL16 (136 aa).

The protein belongs to the universal ribosomal protein uL16 family. Part of the 50S ribosomal subunit.

In terms of biological role, binds 23S rRNA and is also seen to make contacts with the A and possibly P site tRNAs. The protein is Large ribosomal subunit protein uL16 of Actinobacillus succinogenes (strain ATCC 55618 / DSM 22257 / CCUG 43843 / 130Z).